Consider the following 357-residue polypeptide: UDP-N-acetylglucosamine--N-acetylmuramyl-(pentapeptide) pyrophosphoryl-undecaprenol N-acetylglucosamine transferase (357 aa).

UDP-N-acetyl-alpha-D-glucosamine-binding positions include 15-17, Asn-124, Arg-165, Ser-191, and Gln-285; that span reads TGG.

Belongs to the glycosyltransferase 28 family. MurG subfamily.

It is found in the cell inner membrane. It carries out the reaction di-trans,octa-cis-undecaprenyl diphospho-N-acetyl-alpha-D-muramoyl-L-alanyl-D-glutamyl-meso-2,6-diaminopimeloyl-D-alanyl-D-alanine + UDP-N-acetyl-alpha-D-glucosamine = di-trans,octa-cis-undecaprenyl diphospho-[N-acetyl-alpha-D-glucosaminyl-(1-&gt;4)]-N-acetyl-alpha-D-muramoyl-L-alanyl-D-glutamyl-meso-2,6-diaminopimeloyl-D-alanyl-D-alanine + UDP + H(+). The protein operates within cell wall biogenesis; peptidoglycan biosynthesis. Cell wall formation. Catalyzes the transfer of a GlcNAc subunit on undecaprenyl-pyrophosphoryl-MurNAc-pentapeptide (lipid intermediate I) to form undecaprenyl-pyrophosphoryl-MurNAc-(pentapeptide)GlcNAc (lipid intermediate II). This Microcystis aeruginosa (strain NIES-843 / IAM M-2473) protein is UDP-N-acetylglucosamine--N-acetylmuramyl-(pentapeptide) pyrophosphoryl-undecaprenol N-acetylglucosamine transferase.